The primary structure comprises 723 residues: Catalase-peroxidase (723 aa).

The segment at residues 97–225 (WHAAGSYRVT…LAAVQMGLIY (129 aa)) is a cross-link (tryptophyl-tyrosyl-methioninium (Trp-Tyr) (with M-251)). The active-site Proton acceptor is the H98. The tryptophyl-tyrosyl-methioninium (Tyr-Met) (with W-97) cross-link spans 225–251 (YVNPEGVNGKSDPLATAAQMRETFARM). H266 contacts heme b.

This sequence belongs to the peroxidase family. Peroxidase/catalase subfamily. Homodimer or homotetramer. Heme b is required as a cofactor. In terms of processing, formation of the three residue Trp-Tyr-Met cross-link is important for the catalase, but not the peroxidase activity of the enzyme.

The catalysed reaction is H2O2 + AH2 = A + 2 H2O. It catalyses the reaction 2 H2O2 = O2 + 2 H2O. Its function is as follows. Bifunctional enzyme with both catalase and broad-spectrum peroxidase activity. The protein is Catalase-peroxidase of Agrobacterium fabrum (strain C58 / ATCC 33970) (Agrobacterium tumefaciens (strain C58)).